Here is a 215-residue protein sequence, read N- to C-terminus: BAG family molecular chaperone regulator 5, mitochondrial (215 aa).

Residues 1–14 constitute a mitochondrion transit peptide; that stretch reads MKRSRKFSSSTTTT. Residues 50–79 enclose the IQ domain; it reads ATAAAARIQSGYRSYRIRNLYKKISSINRE. The region spanning 72–149 is the BAG domain; that stretch reads KISSINREAN…GMQEILDSIS (78 aa).

Binds to the ATPase domain of HSP70/HSC70 chaperones. Interacts with HSP70-1.

The protein localises to the mitochondrion. In terms of biological role, co-chaperone that regulates diverse cellular pathways, such as programmed cell death and stress responses. This Arabidopsis thaliana (Mouse-ear cress) protein is BAG family molecular chaperone regulator 5, mitochondrial (BAG5).